The following is a 200-amino-acid chain: RNA-binding protein with multiple splicing 2 (200 aa).

The RRM domain occupies R22–A99. The interval D32–F42 is important for homodimerization.

As to quaternary structure, homodimer. Expressed in developing heart.

It is found in the cytoplasm. The protein resides in the nucleus. Its subcellular location is the stress granule. Its function is as follows. RNA-binding protein involved in the regulation of smooth muscle cell differentiation and proliferation in the gastrointestinal system. Binds NOG mRNA, the major inhibitor of the bone morphogenetic protein (BMP) pathway. Mediates an increase of NOG mRNA levels, thereby contributing to the negative regulation of BMP signaling pathway and promoting reversible dedifferentiation and proliferation of smooth muscle cells. Acts as a pre-mRNA alternative splicing regulator. Mediates ACTN1 and FLNB alternative splicing. Likely binds to mRNA tandem CAC trinucleotide or CA dinucleotide motifs. The sequence is that of RNA-binding protein with multiple splicing 2 from Gallus gallus (Chicken).